The following is a 444-amino-acid chain: Putative GTP cyclohydrolase URC1 (444 aa).

268-272 (RVHDE) contributes to the GTP binding site. Zn(2+)-binding residues include cysteine 273, cysteine 284, and cysteine 286. 315-317 (EGR) contacts GTP. Residue aspartate 353 is the Proton acceptor of the active site. The active-site Nucleophile is arginine 355. Positions 377 and 382 each coordinate GTP.

It belongs to the GTP cyclohydrolase II family.

It is found in the cytoplasm. It localises to the nucleus. Its function is as follows. Involved in uracil catabolism. The sequence is that of Putative GTP cyclohydrolase URC1 (URC1) from Lachancea kluyveri (Yeast).